A 365-amino-acid chain; its full sequence is Histidinol-phosphate aminotransferase 2 (365 aa).

At Lys-222 the chain carries N6-(pyridoxal phosphate)lysine.

Belongs to the class-II pyridoxal-phosphate-dependent aminotransferase family. Histidinol-phosphate aminotransferase subfamily. As to quaternary structure, homodimer. It depends on pyridoxal 5'-phosphate as a cofactor.

The catalysed reaction is L-histidinol phosphate + 2-oxoglutarate = 3-(imidazol-4-yl)-2-oxopropyl phosphate + L-glutamate. The protein operates within amino-acid biosynthesis; L-histidine biosynthesis; L-histidine from 5-phospho-alpha-D-ribose 1-diphosphate: step 7/9. In Bordetella bronchiseptica (strain ATCC BAA-588 / NCTC 13252 / RB50) (Alcaligenes bronchisepticus), this protein is Histidinol-phosphate aminotransferase 2 (hisC2).